Reading from the N-terminus, the 202-residue chain is Outer-membrane lipoprotein LolB (202 aa).

A signal peptide spans 1–24 (MESKEQHLIRQYFILAMFFLFLAG). Residue Cys25 is the site of N-palmitoyl cysteine attachment. Cys25 carries S-diacylglycerol cysteine lipidation.

Belongs to the LolB family. As to quaternary structure, monomer.

The protein resides in the cell outer membrane. Its function is as follows. Plays a critical role in the incorporation of lipoproteins in the outer membrane after they are released by the LolA protein. This chain is Outer-membrane lipoprotein LolB, found in Pseudoalteromonas translucida (strain TAC 125).